A 435-amino-acid polypeptide reads, in one-letter code: ATP-dependent protease ATPase subunit HslU (435 aa).

ATP contacts are provided by residues Ile18, 60-65 (GVGKTE), Asp248, Glu313, and Arg385.

The protein belongs to the ClpX chaperone family. HslU subfamily. A double ring-shaped homohexamer of HslV is capped on each side by a ring-shaped HslU homohexamer. The assembly of the HslU/HslV complex is dependent on binding of ATP.

The protein resides in the cytoplasm. Its function is as follows. ATPase subunit of a proteasome-like degradation complex; this subunit has chaperone activity. The binding of ATP and its subsequent hydrolysis by HslU are essential for unfolding of protein substrates subsequently hydrolyzed by HslV. HslU recognizes the N-terminal part of its protein substrates and unfolds these before they are guided to HslV for hydrolysis. This Sinorhizobium medicae (strain WSM419) (Ensifer medicae) protein is ATP-dependent protease ATPase subunit HslU.